A 196-amino-acid polypeptide reads, in one-letter code: Ribosome maturation factor RimP (196 aa).

Residues 164–196 (LAPQKPNKPGPKKPGHDKKKPSNEPAAGKPRAE) form a disordered region. Positions 173-182 (GPKKPGHDKK) are enriched in basic residues.

Belongs to the RimP family.

The protein resides in the cytoplasm. Required for maturation of 30S ribosomal subunits. This Xanthomonas campestris pv. campestris (strain 8004) protein is Ribosome maturation factor RimP.